Reading from the N-terminus, the 88-residue chain is Phosphocarrier protein HPr (88 aa).

One can recognise an HPr domain in the interval 1–88 (MVVKTVRVLN…RLFQNKFEEE (88 aa)). The active-site Pros-phosphohistidine intermediate is the His-15. At Ser-46 the chain carries Phosphoserine; by HPrK/P.

The protein belongs to the HPr family.

Its subcellular location is the cytoplasm. Phosphorylation on Ser-46 inhibits the phosphoryl transfer from enzyme I to HPr. Its function is as follows. General (non sugar-specific) component of the phosphoenolpyruvate-dependent sugar phosphotransferase system (sugar PTS). This major carbohydrate active-transport system catalyzes the phosphorylation of incoming sugar substrates concomitantly with their translocation across the cell membrane. The phosphoryl group from phosphoenolpyruvate (PEP) is transferred to the phosphoryl carrier protein HPr by enzyme I. Phospho-HPr then transfers it to the PTS EIIA domain. This Treponema pallidum (strain Nichols) protein is Phosphocarrier protein HPr (ptsH).